Consider the following 238-residue polypeptide: tRNA1(Val) (adenine(37)-N6)-methyltransferase (238 aa).

It belongs to the methyltransferase superfamily. tRNA (adenine-N(6)-)-methyltransferase family.

It is found in the cytoplasm. The enzyme catalyses adenosine(37) in tRNA1(Val) + S-adenosyl-L-methionine = N(6)-methyladenosine(37) in tRNA1(Val) + S-adenosyl-L-homocysteine + H(+). In terms of biological role, specifically methylates the adenine in position 37 of tRNA(1)(Val) (anticodon cmo5UAC). This Shewanella baltica (strain OS185) protein is tRNA1(Val) (adenine(37)-N6)-methyltransferase.